The following is a 199-amino-acid chain: MAKVLVLYYSSYGHLEVMAKAIAEGAREAGASVDIKRVPETVPLEIAKGAHFKLDQDAPVAKVEDLADYDAIIVGAPTRFGRMASQMAAFFDAAGGLWARGALHGKVAGAFTSTATQHGGQETTLFSIITNMLHFGTTIVGLDYGHAGQMTLDEITGGSPYGATTIAGGDGSRQPSENELTGARYQGRKIAETAIKLHG.

The Flavodoxin-like domain occupies 4–190 (VLVLYYSSYG…TGARYQGRKI (187 aa)). Residues 10–15 (SSYGHL) and 78–80 (TRF) each bind FMN. Tyr-12 provides a ligand contact to NAD(+). Residue Trp-98 participates in substrate binding. Residues 113 to 119 (STATQHG) and His-134 each bind FMN.

The protein belongs to the WrbA family. FMN is required as a cofactor.

It carries out the reaction a quinone + NADH + H(+) = a quinol + NAD(+). The catalysed reaction is a quinone + NADPH + H(+) = a quinol + NADP(+). The sequence is that of NAD(P)H dehydrogenase (quinone) from Caulobacter vibrioides (strain ATCC 19089 / CIP 103742 / CB 15) (Caulobacter crescentus).